The following is a 175-amino-acid chain: ATP synthase subunit delta (175 aa).

This sequence belongs to the ATPase delta chain family. As to quaternary structure, F-type ATPases have 2 components, F(1) - the catalytic core - and F(0) - the membrane proton channel. F(1) has five subunits: alpha(3), beta(3), gamma(1), delta(1), epsilon(1). F(0) has three main subunits: a(1), b(2) and c(10-14). The alpha and beta chains form an alternating ring which encloses part of the gamma chain. F(1) is attached to F(0) by a central stalk formed by the gamma and epsilon chains, while a peripheral stalk is formed by the delta and b chains.

Its subcellular location is the cell membrane. In terms of biological role, f(1)F(0) ATP synthase produces ATP from ADP in the presence of a proton or sodium gradient. F-type ATPases consist of two structural domains, F(1) containing the extramembraneous catalytic core and F(0) containing the membrane proton channel, linked together by a central stalk and a peripheral stalk. During catalysis, ATP synthesis in the catalytic domain of F(1) is coupled via a rotary mechanism of the central stalk subunits to proton translocation. Its function is as follows. This protein is part of the stalk that links CF(0) to CF(1). It either transmits conformational changes from CF(0) to CF(1) or is implicated in proton conduction. The polypeptide is ATP synthase subunit delta (Stenotrophomonas maltophilia (strain K279a)).